We begin with the raw amino-acid sequence, 650 residues long: Acetyl-coenzyme A synthetase (650 aa).

Residues arginine 191–arginine 194, threonine 311, and asparagine 335 contribute to the CoA site. Residues glycine 387 to proline 389, aspartate 411 to threonine 416, aspartate 500, and arginine 515 each bind ATP. Serine 523 is a CoA binding site. Arginine 526 contacts ATP. Mg(2+) contacts are provided by valine 537, histidine 539, and valine 542. Residue arginine 584 coordinates CoA. The residue at position 609 (lysine 609) is an N6-acetyllysine.

This sequence belongs to the ATP-dependent AMP-binding enzyme family. The cofactor is Mg(2+). Post-translationally, acetylated. Deacetylation by the SIR2-homolog deacetylase activates the enzyme.

The enzyme catalyses acetate + ATP + CoA = acetyl-CoA + AMP + diphosphate. Its function is as follows. Catalyzes the conversion of acetate into acetyl-CoA (AcCoA), an essential intermediate at the junction of anabolic and catabolic pathways. AcsA undergoes a two-step reaction. In the first half reaction, AcsA combines acetate with ATP to form acetyl-adenylate (AcAMP) intermediate. In the second half reaction, it can then transfer the acetyl group from AcAMP to the sulfhydryl group of CoA, forming the product AcCoA. The sequence is that of Acetyl-coenzyme A synthetase from Shewanella frigidimarina (strain NCIMB 400).